We begin with the raw amino-acid sequence, 331 residues long: Probable endo-beta-1,4-glucanase B (331 aa).

An N-terminal signal peptide occupies residues 1–18; it reads MKFQSTLLLAAAAGSALA. N-linked (GlcNAc...) asparagine glycosylation is found at Asn38 and Asn100. Catalysis depends on Glu160, which acts as the Proton donor. N-linked (GlcNAc...) asparagine glycosylation occurs at Asn211. The active-site Nucleophile is Glu266. N-linked (GlcNAc...) asparagine glycosylation occurs at Asn288.

The protein belongs to the glycosyl hydrolase 5 (cellulase A) family.

The protein resides in the secreted. It catalyses the reaction Endohydrolysis of (1-&gt;4)-beta-D-glucosidic linkages in cellulose, lichenin and cereal beta-D-glucans.. Its function is as follows. Has endoglucanase activity on substrates containing beta-1,4 glycosidic bonds, like in carboxymethylcellulose (CMC), hydroxyethylcellulose (HEC) and beta-glucan. Involved in the degradation of complex natural cellulosic substrates. This chain is Probable endo-beta-1,4-glucanase B (eglB), found in Aspergillus niger (strain ATCC MYA-4892 / CBS 513.88 / FGSC A1513).